Consider the following 189-residue polypeptide: Large ribosomal subunit protein bL9 (189 aa).

This sequence belongs to the bacterial ribosomal protein bL9 family.

Its function is as follows. Binds to the 23S rRNA. In Brucella abortus (strain S19), this protein is Large ribosomal subunit protein bL9.